The primary structure comprises 520 residues: Cytosol aminopeptidase (520 aa).

Zn(2+) contacts are provided by leucine 200, methionine 201, lysine 280, and aspartate 285. Substrate contacts are provided by lysine 280, aspartate 285, serine 290, and lysine 292. Aspartate 285 contributes to the Mg(2+) binding site. The active site involves lysine 292. Arginine 301, aspartate 303, aspartate 362, and glutamate 364 together coordinate Zn(2+). 2 residues coordinate substrate: aspartate 303 and aspartate 362. 2 residues coordinate Mg(2+): aspartate 362 and glutamate 364. Residue arginine 366 is part of the active site.

It belongs to the peptidase M17 family. As to quaternary structure, homohexamer. Zn(2+) is required as a cofactor. It depends on Mn(2+) as a cofactor.

The protein localises to the cytoplasm. The enzyme catalyses Release of an N-terminal amino acid, Xaa-|-Yaa-, in which Xaa is preferably Leu, but may be other amino acids including Pro although not Arg or Lys, and Yaa may be Pro. Amino acid amides and methyl esters are also readily hydrolyzed, but rates on arylamides are exceedingly low.. The catalysed reaction is an S-substituted L-cysteinylglycine + H2O = an S-substituted L-cysteine + glycine. It carries out the reaction L-cysteinylglycine + H2O = L-cysteine + glycine. It catalyses the reaction S-benzyl-L-cysteinylglycine + H2O = S-benzyl-L-cysteine + glycine. The enzyme catalyses Release of N-terminal proline from a peptide.. Functionally, cytosolic metallopeptidase that catalyzes the removal of unsubstituted N-terminal hydrophobic amino acids from various peptides. The presence of Zn(2+) ions is essential for the peptidase activity, and the association with other cofactors can modulate the substrate spectificity of the enzyme. For instance, in the presence of Mn(2+), it displays a specific Cys-Gly hydrolyzing activity of Cys-Gly-S-conjugates. Involved in the metabolism of glutathione and in the degradation of glutathione S-conjugates, which may play a role in the control of the cell redox status. The protein is Cytosol aminopeptidase (lap3) of Xenopus tropicalis (Western clawed frog).